A 685-amino-acid chain; its full sequence is Putative pentatricopeptide repeat-containing protein At3g08820 (685 aa).

12 PPR repeats span residues 75–109 (NIFL…GLYL), 110–144 (HGFT…GFNH), 145–175 (DVAA…IPDR), 176–210 (SVVT…GVKP), 211–245 (DSYF…EMQK), 246–276 (NSFV…MVEK), 277–311 (DIVT…NLKP), 312–346 (DQFS…EFLT), 347–381 (NLFM…DIVI), 383–412 (NAAI…GISP), 413–443 (DGST…ISCV), and 449–479 (TVEH…MPMR). The segment at 484–559 (VWGALLSGCR…IPGYSWIELE (76 aa)) is type E motif. A type E(+) motif region spans residues 560 to 590 (GKVHEFLADDKSHPLSDKIYAKLEDLGNEMR). Residues 591–685 (LMGFVPTTEF…NGSCSCNDYW (95 aa)) form a type DYW motif region.

It belongs to the PPR family. PCMP-H subfamily.

This chain is Putative pentatricopeptide repeat-containing protein At3g08820 (PCMP-H84), found in Arabidopsis thaliana (Mouse-ear cress).